A 68-amino-acid chain; its full sequence is Large ribosomal subunit protein uL29 (68 aa).

The protein belongs to the universal ribosomal protein uL29 family.

The protein is Large ribosomal subunit protein uL29 of Albidiferax ferrireducens (strain ATCC BAA-621 / DSM 15236 / T118) (Rhodoferax ferrireducens).